The following is a 132-amino-acid chain: Protein FasE (132 aa).

This chain is Protein FasE (fasE), found in Escherichia coli.